The sequence spans 349 residues: tRNA pseudouridine synthase D (349 aa).

Phe-27 is a substrate binding site. The active-site Nucleophile is Asp-80. Asn-129 serves as a coordination point for substrate. Positions Gly-155–Leu-303 constitute a TRUD domain. Residue Phe-329 coordinates substrate.

Belongs to the pseudouridine synthase TruD family.

The enzyme catalyses uridine(13) in tRNA = pseudouridine(13) in tRNA. Its function is as follows. Responsible for synthesis of pseudouridine from uracil-13 in transfer RNAs. The polypeptide is tRNA pseudouridine synthase D (Escherichia coli O81 (strain ED1a)).